The sequence spans 484 residues: Ribosome biogenesis protein YTM1 (484 aa).

The interval 13 to 95 (VKVTFTTTEA…ESNLTLQYVR (83 aa)) is ubiquitin-like (UBL) domain. WD repeat units follow at residues 122–161 (SPSG…IATS), 168–206 (GHTA…HFSG), 216–255 (GHTG…APEA), 288–328 (IHSA…VVTT), 330–373 (STSH…ATTS), 379–419 (GHAN…PATQ), and 448–484 (GEGC…VVAE).

It belongs to the WD repeat WDR12/YTM1 family. Component of the NOP7 complex, composed of ERB1, NOP7 and YTM1. The complex is held together by ERB1, which interacts with NOP7 via its N-terminal domain and with YTM1 via a high-affinity interaction between the seven-bladed beta-propeller domains of the 2 proteins. The NOP7 complex associates with the 66S pre-ribosome. Interacts (via UBL domain) with MDN1 (via VWFA/MIDAS domain).

Its subcellular location is the nucleus. It is found in the nucleolus. The protein localises to the nucleoplasm. Component of the NOP7 complex, which is required for maturation of the 25S and 5.8S ribosomal RNAs and formation of the 60S ribosome. The polypeptide is Ribosome biogenesis protein YTM1 (Chaetomium globosum (strain ATCC 6205 / CBS 148.51 / DSM 1962 / NBRC 6347 / NRRL 1970) (Soil fungus)).